The primary structure comprises 535 residues: MRYEEINLGYEKNLVRYYLTGYDRVAKFYHYNPWNTRSFYDRADYLKDKSNPEALYNLLSFYLKDFALDQKVVENLDKIKKGAFIVLTGQQPGFLTGPLYTIYKAVHAIIEAKRLSELLNHEVVPLFWIGSEDHDVEEVNFLYFPGKEGPQEIKIEFTDLRKIPAGLRPAEPETVEAIEKFEGLLPNFDYKEEVFTEIKKAYHSANLGQAFARLMLKLFGKFGLLVYDGLNPEFKRVTKGYLKNAFLKRDAIEKALFKVYTEQQSLGIEPQLDPCPNHCNMFIFKNDERIALEVAGEKVVSRDGEVSFTREEFLEFMERYPEKLSPNLVVRTSIQSLVFPVLAYVAGPGEIGYYGMLKEVYEIMGTQMPVILPRFTATLIEPRVEKALKEFALLPQEIYQDYDGVFHRVLERLDNLGIDDTFKALKESINSAYKNLQEKLAPLGADFQKLTGENLGRVMAQVKYLEERAQKYHREKNSKYIEKLWYLKTNFLPENEWQERVYNVFYYLAKYGFALIEKLLGIPFNPGKHYLLYLE.

Residues 420–477 adopt a coiled-coil conformation; the sequence is DTFKALKESINSAYKNLQEKLAPLGADFQKLTGENLGRVMAQVKYLEERAQKYHREKN.

The protein belongs to the BshC family.

Functionally, involved in bacillithiol (BSH) biosynthesis. May catalyze the last step of the pathway, the addition of cysteine to glucosamine malate (GlcN-Mal) to generate BSH. This is Putative cysteine ligase BshC from Carboxydothermus hydrogenoformans (strain ATCC BAA-161 / DSM 6008 / Z-2901).